Here is a 371-residue protein sequence, read N- to C-terminus: Spermidine/putrescine import ATP-binding protein PotA (371 aa).

Positions 10–240 constitute an ABC transporter domain; it reads VELRNVTKSY…PKNLFVARFI (231 aa). Residue 42–49 coordinates ATP; it reads GPSGCGKT.

It belongs to the ABC transporter superfamily. Spermidine/putrescine importer (TC 3.A.1.11.1) family. In terms of assembly, the complex is composed of two ATP-binding proteins (PotA), two transmembrane proteins (PotB and PotC) and a solute-binding protein (PotD).

It localises to the cell inner membrane. The enzyme catalyses ATP + H2O + polyamine-[polyamine-binding protein]Side 1 = ADP + phosphate + polyamineSide 2 + [polyamine-binding protein]Side 1.. In terms of biological role, part of the ABC transporter complex PotABCD involved in spermidine/putrescine import. Responsible for energy coupling to the transport system. This chain is Spermidine/putrescine import ATP-binding protein PotA, found in Haemophilus ducreyi (strain 35000HP / ATCC 700724).